An 884-amino-acid chain; its full sequence is Chitin synthase E (884 aa).

2 disordered regions span residues 1–58 (MGTP…PAVS) and 73–108 (AVFAAPPYQESEAASENTFRARSNGDKASREGSRAG). Composition is skewed to polar residues over residues 37–48 (QSLLERNNSSHY) and 84–93 (EAASENTFRA). An N-linked (GlcNAc...) asparagine glycan is attached at Asn-44. Residues 95 to 105 (SNGDKASREGS) show a composition bias toward basic and acidic residues. A glycan (N-linked (GlcNAc...) asparagine) is linked at Asn-301. The next 7 membrane-spanning stretches (helical) occupy residues 513–532 (WLNGSFAAGLYAIMHFGRIY), 556–576 (IMTWFSLASYWLTSSVIMDLV), 597–617 (IVNNFVKYGYVWVLTLQFIMA), 635–655 (YFSLVQLYVLILSFYLVVGAF), 681–701 (GGIVLIALVSTYGIYIIASVL), 708–728 (IITSSWAYFLGMTTSINILMV), and 812–832 (VLVCLWVFSNLLVTLLITATG). The N-linked (GlcNAc...) asparagine glycan is linked to Asn-840. The chain crosses the membrane as a helical span at residues 852-872 (VILWITAGLSLFRFIGSLWFL).

This sequence belongs to the chitin synthase family. Class III subfamily.

It is found in the cell membrane. It catalyses the reaction [(1-&gt;4)-N-acetyl-beta-D-glucosaminyl](n) + UDP-N-acetyl-alpha-D-glucosamine = [(1-&gt;4)-N-acetyl-beta-D-glucosaminyl](n+1) + UDP + H(+). Functionally, polymerizes chitin, a structural polymer of the cell wall and septum, by transferring the sugar moiety of UDP-GlcNAc to the non-reducing end of the growing chitin polymer. Plays an important role in septal growth or maintenance. Mediates colony spore formation. ChsE and chsD seem to play a functionally redundant role in lateral cell wall chitin synthesis. Involved in resistance to echinocandins. This chain is Chitin synthase E, found in Aspergillus niger (strain ATCC MYA-4892 / CBS 513.88 / FGSC A1513).